A 130-amino-acid polypeptide reads, in one-letter code: S-protein homolog 30 (130 aa).

N-linked (GlcNAc...) asparagine glycosylation is found at Asn-64 and Asn-77.

It belongs to the plant self-incompatibility (S1) protein family.

It localises to the secreted. The protein is S-protein homolog 30 of Arabidopsis thaliana (Mouse-ear cress).